A 442-amino-acid chain; its full sequence is Glutamyl-tRNA reductase (442 aa).

Substrate contacts are provided by residues 49–52, Ser109, 114–116, and Gln120; these read TCNR and EGQ. Cys50 (nucleophile) is an active-site residue. 198 to 203 lines the NADP(+) pocket; it reads GAGRMA. The disordered stretch occupies residues 420-442; sequence MAAAQRLFDLPGDDADRDRSDAK. Positions 433 to 442 are enriched in basic and acidic residues; it reads DADRDRSDAK.

It belongs to the glutamyl-tRNA reductase family. In terms of assembly, homodimer.

The enzyme catalyses (S)-4-amino-5-oxopentanoate + tRNA(Glu) + NADP(+) = L-glutamyl-tRNA(Glu) + NADPH + H(+). Its pathway is porphyrin-containing compound metabolism; protoporphyrin-IX biosynthesis; 5-aminolevulinate from L-glutamyl-tRNA(Glu): step 1/2. It participates in porphyrin-containing compound metabolism; chlorophyll biosynthesis. In terms of biological role, catalyzes the NADPH-dependent reduction of glutamyl-tRNA(Glu) to glutamate 1-semialdehyde (GSA). The protein is Glutamyl-tRNA reductase of Synechococcus sp. (strain RCC307).